A 453-amino-acid chain; its full sequence is MDEFDPLDAVQQIHVQARHPKNRLLSIAHDAKFVDSVIASYPTFKPVVNERCGTWYVNRRHAPISVYFKSTDGHTGQWSFSCRRLNLHLLNEITTCDGLIIVDSTRRGKRMPDALSKTIPIWIATLNKCVFERLRPHSFPNARLAFLPPFLPDTEKSSILQRLDGFVDSLMQSGIDLDALAAKLTKPIRPLWVTPASRLTSAQFEEYFTVVLVTASAQVQNGYSREHGFLYVQGAADDEEEWSHGLTPEVFWQNTESILTCPEEQLEQKISLLLSSTRNSPTMSNSSLTHLLPTPIFVGDVTGFYPPPENTSYFVLNLSNTTLNVKNELCFPIPSGKKGAPVFRKHFPSILQELNSLDPPFYERDAIFIVDEGNAKEAASCLALMILCLYYDLHMHLLAHPISLSASQSHLTKQTVRQFLVKITELHSKTNPSRAFLLAVNSLLLSANTIATS.

The protein to yeast RIT1.

This is an uncharacterized protein from Schizosaccharomyces pombe (strain 972 / ATCC 24843) (Fission yeast).